The following is a 454-amino-acid chain: Ornithine aminotransferase (454 aa).

Pyridoxal 5'-phosphate is bound by residues Gly-124, Thr-125, and Gln-267. Lys-293 is modified (N6-(pyridoxal phosphate)lysine). Thr-321 is a binding site for pyridoxal 5'-phosphate.

This sequence belongs to the class-III pyridoxal-phosphate-dependent aminotransferase family. Homotetramer; dimer of dimers. It depends on pyridoxal 5'-phosphate as a cofactor.

The enzyme catalyses L-ornithine + 2-oxoglutarate = L-glutamate 5-semialdehyde + L-glutamate. It catalyses the reaction L-lysine + 2-oxoglutarate = (S)-2-amino-6-oxohexanoate + L-glutamate. Its function is as follows. Catalyzes the conversion of L-ornithine and 2-oxoglutarate to L-glutamate semialdehyde and L-glutamate. L-ornithine is the best substrate, but the enzyme also shows good activity toward L-lysine, and low activity toward D-ornithine, D-lysine, 5-aminovalerate, 6-aminohexanoate and GABA. The enzyme activity is specific for 2-oxoglutarate. The sequence is that of Ornithine aminotransferase from Pyrococcus horikoshii (strain ATCC 700860 / DSM 12428 / JCM 9974 / NBRC 100139 / OT-3).